Here is a 491-residue protein sequence, read N- to C-terminus: Argininosuccinate lyase (491 aa).

It belongs to the lyase 1 family. Argininosuccinate lyase subfamily.

The protein localises to the cytoplasm. It catalyses the reaction 2-(N(omega)-L-arginino)succinate = fumarate + L-arginine. It participates in amino-acid biosynthesis; L-arginine biosynthesis; L-arginine from L-ornithine and carbamoyl phosphate: step 3/3. The chain is Argininosuccinate lyase from Methanosarcina barkeri (strain Fusaro / DSM 804).